Reading from the N-terminus, the 441-residue chain is uncharacterized protein (441 aa).

The protein belongs to the outer membrane factor (OMF) (TC 1.B.17) family.

This is an uncharacterized protein from Haemophilus influenzae (strain ATCC 51907 / DSM 11121 / KW20 / Rd).